The primary structure comprises 355 residues: Peptide chain release factor 1 (355 aa).

Gln-233 carries the post-translational modification N5-methylglutamine.

Belongs to the prokaryotic/mitochondrial release factor family. In terms of processing, methylated by PrmC. Methylation increases the termination efficiency of RF1.

The protein localises to the cytoplasm. Functionally, peptide chain release factor 1 directs the termination of translation in response to the peptide chain termination codons UAG and UAA. The protein is Peptide chain release factor 1 of Caldicellulosiruptor bescii (strain ATCC BAA-1888 / DSM 6725 / KCTC 15123 / Z-1320) (Anaerocellum thermophilum).